The primary structure comprises 492 residues: MQDPNICQHCQLKDNPGALIWVKCDSCPQWVHVKCVPLKRIHYSNLTSSEVLSYPNSAKQIKSYRCPNHKEGEYLTAYALITQKGKRQRNKENPEDSHINKRYNFRKKKLLDYIALNEGESKRDKMNHPHKESFMKSFEKWKNGSNIINAADFAEKFDNIDVPYKIIDPLNSGVYVPNVGTDNGCLTVNYITEMIGEDYHVDVMDVQSQMNENWNLGSWNEYFTNTEPDRRDRIRNVISLEVSNIEGLELERPTAVRQNDLVDKIWSFNGHLEKVNGEKAEENDPKPKVTKYILMSVKDAYTDFHLDFAGTSVYYNVISGQKKFLLFPPTQSNIDKYIEWSLKEDQNSVFLGDILEDGIAMELDAGDLFMIPAGYIHAVYTPVDSLVFGGNFLTIRDLETHLKIVEIEKLTKVPRRFTFPKFDQVMGKLCEYLALDKNKITSDVSDGDLLSRTTNCAIQSLHAYVIKPEVKYKPLNFTSKKHLAKALADLIS.

Residues 4–72 form a PHD-type; atypical zinc finger; sequence PNICQHCQLK…SYRCPNHKEG (69 aa). The JmjC domain occupies 254 to 409; sequence TAVRQNDLVD…THLKIVEIEK (156 aa). Residue Thr-302 participates in substrate binding. Residues His-305 and Asp-307 each coordinate Fe cation. Position 322 (Lys-322) interacts with substrate. His-377 contributes to the Fe cation binding site.

The protein belongs to the JHDM1 histone demethylase family. Requires Fe(2+) as cofactor.

The protein localises to the nucleus. The catalysed reaction is N(6),N(6)-dimethyl-L-lysyl(36)-[histone H3] + 2 2-oxoglutarate + 2 O2 = L-lysyl(36)-[histone H3] + 2 formaldehyde + 2 succinate + 2 CO2. Functionally, histone demethylase that specifically demethylates 'Lys-36' of histone H3, thereby playing a central role in histone code. Does not demethylate H3 'Lys-4' nor 'Lys-79'. This is JmjC domain-containing histone demethylation protein 1 (JHD1) from Saccharomyces cerevisiae (strain ATCC 204508 / S288c) (Baker's yeast).